A 507-amino-acid polypeptide reads, in one-letter code: Phosphoprotein (507 aa).

Residues 1–48 (MAEEQARHVKNGLECIRALKAEPIGSLAIGEAMAAWSEISDNPGQERA) form an interaction with N0 region. Disordered regions lie at residues 42 to 91 (NPGQ…DDTE), 133 to 163 (SGLD…TEGY), 201 to 227 (NNFP…SETP), 252 to 273 (TQCA…GNVP), and 285 to 307 (WTPE…GDHY). 2 positions are modified to phosphoserine: Ser86 and Ser151. Positions 144-160 (GDNESENSDVDIGEPDT) are enriched in acidic residues. Low complexity predominate over residues 260-270 (SEPSGPGAPAG). Polar residues predominate over residues 286–301 (TPESGTTISPRSQNNK). Residues 304-376 (GDHYDDELFS…LSSIMIAIPG (73 aa)) form a multimerization region. Interaction with the L polymerase stretches follow at residues 361–377 (STLE…IPGL) and 396–410 (PIIG…AEVL). The interval 457-507 (GPVSRSVIRSIIKSSRIEEDRKRYLMTLLDDIKGANDLSKFHQMLMKIIMK) is x domain (XD). The tract at residues 459-507 (VSRSVIRSIIKSSRIEEDRKRYLMTLLDDIKGANDLSKFHQMLMKIIMK) is interaction with the nucleocapsid (N-RNA).

This sequence belongs to the morbillivirus P protein family. Homotetramer. Interacts (via multimerization domain and XD domain) with polymerase L; this interaction forms the polymerase L-P complex. Interacts (via N-terminus) with N0 (via Ncore); this interaction allows P to chaperon N0 to avoid N polymerization and non-specific RNA binding before encapsidation. Interacts (via C-terminus) with N-RNA template (via Ntail); this interaction maintains the P/L complex anchored to the nucleocapsid template during the sequential transcription. Interacts (via C-terminus) with protein C this interaction allows C to associate with the ribonucleocapsid. Post-translationally, phosphorylation on serines by host CK2 is necessary for the formation of viral factories.

In terms of biological role, essential cofactor of the RNA polymerase L that plays a central role in the transcription and replication by forming the polymerase complex with RNA polymerase L and recruiting L to the genomic N-RNA template for RNA synthesis. Also plays a central role in the encapsidation of nascent RNA chains by forming the encapsidation complex with the nucleocapsid protein N (N-P complex). Acts as a chaperone for newly synthesized free N protein, so-called N0, allowing encapsidation of nascent RNA chains during replication. The nucleoprotein protein N prevents excessive phosphorylation of P, which leads to down-regulation of viral transcription/ replication. Participates, together with N, in the formation of viral factories (viroplasms), which are large inclusions in the host cytoplasm where replication takes place. In Homo sapiens (Human), this protein is Phosphoprotein (P/V).